The primary structure comprises 609 residues: Elongation factor 4 (609 aa).

The region spanning Ser-11–Ser-193 is the tr-type G domain. Residues Asp-23–Thr-28 and Asn-140–Asp-143 each bind GTP.

This sequence belongs to the TRAFAC class translation factor GTPase superfamily. Classic translation factor GTPase family. LepA subfamily.

Its subcellular location is the cell membrane. The catalysed reaction is GTP + H2O = GDP + phosphate + H(+). Its function is as follows. Required for accurate and efficient protein synthesis under certain stress conditions. May act as a fidelity factor of the translation reaction, by catalyzing a one-codon backward translocation of tRNAs on improperly translocated ribosomes. Back-translocation proceeds from a post-translocation (POST) complex to a pre-translocation (PRE) complex, thus giving elongation factor G a second chance to translocate the tRNAs correctly. Binds to ribosomes in a GTP-dependent manner. The sequence is that of Elongation factor 4 from Halalkalibacterium halodurans (strain ATCC BAA-125 / DSM 18197 / FERM 7344 / JCM 9153 / C-125) (Bacillus halodurans).